Reading from the N-terminus, the 108-residue chain is Thiosulfate sulfurtransferase GlpE (108 aa).

The region spanning 17–105 (QEKEAVLVDI…WQRQFPAEVA (89 aa)) is the Rhodanese domain. The active-site Cysteine persulfide intermediate is C65.

It belongs to the GlpE family.

Its subcellular location is the cytoplasm. It carries out the reaction thiosulfate + hydrogen cyanide = thiocyanate + sulfite + 2 H(+). The enzyme catalyses thiosulfate + [thioredoxin]-dithiol = [thioredoxin]-disulfide + hydrogen sulfide + sulfite + 2 H(+). In terms of biological role, transferase that catalyzes the transfer of sulfur from thiosulfate to thiophilic acceptors such as cyanide or dithiols. May function in a CysM-independent thiosulfate assimilation pathway by catalyzing the conversion of thiosulfate to sulfite, which can then be used for L-cysteine biosynthesis. This chain is Thiosulfate sulfurtransferase GlpE, found in Shigella dysenteriae serotype 1 (strain Sd197).